We begin with the raw amino-acid sequence, 597 residues long: Tubulin polyglutamylase ttll-4 (597 aa).

A compositionally biased stretch (polar residues) spans 1-18; that stretch reads MSSGYSSAPSVSHTSSEA. Disordered stretches follow at residues 1–39 and 80–107; these read MSSG…DEQR and SKSK…FLKS. Acidic residues predominate over residues 26-35; sequence YEDGVDEEAS. The region spanning 134 to 472 is the TTL domain; the sequence is QSRLTWCHNS…HVPPSFDKLH (339 aa). ATP-binding positions include K250, 256-257, 278-281, and 291-293; these read RG, QHYI, and KFD. Position 256 (R256) interacts with a protein. R317 is a binding site for L-glutamate. 338–339 contributes to the ATP binding site; that stretch reads TN. The L-glutamate site is built by Y340, S341, and K358. D418, E431, and N433 together coordinate Mg(2+). K449 contributes to the L-glutamate binding site.

It belongs to the tubulin--tyrosine ligase family. The cofactor is Mg(2+).

The enzyme catalyses L-glutamyl-[protein] + L-glutamate + ATP = gamma-L-glutamyl-L-glutamyl-[protein] + ADP + phosphate + H(+). In terms of biological role, monoglutamylase which modifies tubulin, adding a single glutamate on the gamma-carboxyl group of specific glutamate residues of target proteins. Involved in the side-chain initiation step of the polyglutamylation reaction but not in the elongation step. Preferentially modifies beta-tail tubulin over the alpha-tubulin. Involved in side-chain glutamylation of tubulin in sensory cilia. Together with ttll-5 and ttll-11, required for male mating. The protein is Tubulin polyglutamylase ttll-4 (ttll-4) of Caenorhabditis briggsae.